The chain runs to 234 residues: 7-carboxy-7-deazaguanine synthase (234 aa).

The tract at residues 1 to 28 (MPLNCDTKTAGEISSSIPSGSGSHQPAA) is disordered. The span at 13-23 (ISSSIPSGSGS) shows a compositional bias: low complexity. Residues 42-44 (LQG) and arginine 57 contribute to the substrate site. Residues 48-234 (TSGYPTIFIR…LQLHKFIGLP (187 aa)) form the Radical SAM core domain. Positions 61, 65, and 68 each coordinate [4Fe-4S] cluster. A Mg(2+)-binding site is contributed by threonine 70. A substrate-binding site is contributed by threonine 100. S-adenosyl-L-methionine is bound at residue glycine 102. Residue proline 234 coordinates substrate.

This sequence belongs to the radical SAM superfamily. 7-carboxy-7-deazaguanine synthase family. In terms of assembly, homodimer. [4Fe-4S] cluster serves as cofactor. S-adenosyl-L-methionine is required as a cofactor. Requires Mg(2+) as cofactor.

It carries out the reaction 6-carboxy-5,6,7,8-tetrahydropterin + H(+) = 7-carboxy-7-deazaguanine + NH4(+). Its pathway is purine metabolism; 7-cyano-7-deazaguanine biosynthesis. Catalyzes the complex heterocyclic radical-mediated conversion of 6-carboxy-5,6,7,8-tetrahydropterin (CPH4) to 7-carboxy-7-deazaguanine (CDG), a step common to the biosynthetic pathways of all 7-deazapurine-containing compounds. This is 7-carboxy-7-deazaguanine synthase from Methanospirillum hungatei JF-1 (strain ATCC 27890 / DSM 864 / NBRC 100397 / JF-1).